We begin with the raw amino-acid sequence, 723 residues long: Epidermal growth factor receptor kinase substrate 8-like protein 1 (723 aa).

Residues 35 to 164 (QYPVNHLVTF…LHNYRSGRGE (130 aa)) enclose the PTB domain. The segment covering 162–183 (RGERRAAALRATQEELQRDRSP) has biased composition (basic and acidic residues). 4 disordered regions span residues 162-247 (RGER…PRGP), 442-477 (KQLQ…LESE), 537-589 (GPRL…GLDP), and 609-636 (LAQG…GSDA). The residue at position 182 (serine 182) is a Phosphoserine. Threonine 187 carries the phosphothreonine modification. The SH3 domain maps to 478–537 (TAGKWVLCNYDFQARNSSELSVKQRDVLEVLDDSRKWWKVRDPAGQEGYVPYNILTPYPG). Polar residues predominate over residues 543-552 (SQSPARSLNS). Over residues 553–568 (TPPPPPAPAPAPPPAL) the composition is skewed to pro residues. Positions 571–580 (PRWDRPRWDS) are enriched in basic and acidic residues. Positions 689 to 719 (VQRSLLEDKEKVSELEAVMEKQKKKVEGEVE) form a coiled coil.

This sequence belongs to the EPS8 family. As to quaternary structure, interacts with ABI1. Part of a complex that contains SOS1, ABI1 and EPS8L2. Associates with F-actin. Detected in placenta.

The protein localises to the cytoplasm. Functionally, stimulates guanine exchange activity of SOS1. May play a role in membrane ruffling and remodeling of the actin cytoskeleton. This Homo sapiens (Human) protein is Epidermal growth factor receptor kinase substrate 8-like protein 1 (EPS8L1).